We begin with the raw amino-acid sequence, 170 residues long: Arginine repressor (170 aa).

The protein belongs to the ArgR family.

Its subcellular location is the cytoplasm. Its pathway is amino-acid biosynthesis; L-arginine biosynthesis [regulation]. Its function is as follows. Regulates arginine biosynthesis genes. This is Arginine repressor from Bifidobacterium longum (strain NCC 2705).